Here is a 124-residue protein sequence, read N- to C-terminus: Glycine cleavage system H protein (124 aa).

The 83-residue stretch at 19 to 101 folds into the Lipoyl-binding domain; it reads VATVGITDHA…ESGAWFFRMT (83 aa). K60 is modified (N6-lipoyllysine).

Belongs to the GcvH family. As to quaternary structure, the glycine cleavage system is composed of four proteins: P, T, L and H. The cofactor is (R)-lipoate.

The glycine cleavage system catalyzes the degradation of glycine. The H protein shuttles the methylamine group of glycine from the P protein to the T protein. This chain is Glycine cleavage system H protein, found in Acidiphilium cryptum (strain JF-5).